Here is a 458-residue protein sequence, read N- to C-terminus: Pyruvate kinase (458 aa).

Arg-33 is a binding site for substrate. Asn-35, Ser-37, and Asp-67 together coordinate K(+). 35-38 (NASH) provides a ligand contact to ATP. Residues Arg-74 and Lys-148 each contribute to the ATP site. Glu-214 contacts Mg(2+). Residues Gly-237, Asp-238, and Thr-270 each coordinate substrate. Asp-238 serves as a coordination point for Mg(2+).

It belongs to the pyruvate kinase family. In terms of assembly, homotetramer. A divalent metal cation serves as cofactor.

It carries out the reaction pyruvate + ATP = phosphoenolpyruvate + ADP + H(+). It participates in carbohydrate degradation; glycolysis; pyruvate from D-glyceraldehyde 3-phosphate: step 5/5. With respect to regulation, not activated by classical allosteric effectors. The protein is Pyruvate kinase (pyk) of Aeropyrum pernix (strain ATCC 700893 / DSM 11879 / JCM 9820 / NBRC 100138 / K1).